We begin with the raw amino-acid sequence, 325 residues long: NADH-quinone oxidoreductase subunit H (325 aa).

8 consecutive transmembrane segments (helical) span residues 11 to 31, 81 to 101, 114 to 134, 154 to 174, 186 to 206, 237 to 257, 265 to 285, and 304 to 324; these read ILIS…CGAF, AIFT…FAIV, IGIL…LFAG, LSYE…VGSF, VWNV…GVAV, FFVG…TLFF, LPPF…FILI, and VCLP…LYNA.

This sequence belongs to the complex I subunit 1 family. In terms of assembly, NDH-1 is composed of 13 different subunits. Subunits NuoA, H, J, K, L, M, N constitute the membrane sector of the complex.

The protein resides in the cell inner membrane. The catalysed reaction is a quinone + NADH + 5 H(+)(in) = a quinol + NAD(+) + 4 H(+)(out). Functionally, NDH-1 shuttles electrons from NADH, via FMN and iron-sulfur (Fe-S) centers, to quinones in the respiratory chain. The immediate electron acceptor for the enzyme in this species is believed to be ubiquinone. Couples the redox reaction to proton translocation (for every two electrons transferred, four hydrogen ions are translocated across the cytoplasmic membrane), and thus conserves the redox energy in a proton gradient. This subunit may bind ubiquinone. This chain is NADH-quinone oxidoreductase subunit H, found in Yersinia pseudotuberculosis serotype O:3 (strain YPIII).